Consider the following 51-residue polypeptide: MGMSFSHLLIILLIIFVLFGAGKLPQVMSDLAKGLKAFKDGMKEDDSTKKD.

Residues 1-21 traverse the membrane as a helical segment; that stretch reads MGMSFSHLLIILLIIFVLFGA.

The protein belongs to the TatA/E family. As to quaternary structure, the Tat system comprises two distinct complexes: a TatABC complex, containing multiple copies of TatA, TatB and TatC subunits, and a separate TatA complex, containing only TatA subunits. Substrates initially bind to the TatABC complex, which probably triggers association of the separate TatA complex to form the active translocon.

It is found in the cell inner membrane. In terms of biological role, part of the twin-arginine translocation (Tat) system that transports large folded proteins containing a characteristic twin-arginine motif in their signal peptide across membranes. TatA could form the protein-conducting channel of the Tat system. The protein is Sec-independent protein translocase protein TatA of Rickettsia bellii (strain RML369-C).